A 141-amino-acid polypeptide reads, in one-letter code: Protein stum homolog (141 aa).

Phosphoserine is present on S26. 2 helical membrane-spanning segments follow: residues 51–71 and 87–107; these read FPVA…GTFV and RHVC…ILTA.

This sequence belongs to the SPEC3 family. Stum subfamily.

It localises to the membrane. The protein is Protein stum homolog of Homo sapiens (Human).